Here is a 145-residue protein sequence, read N- to C-terminus: Deoxyuridine 5'-triphosphate nucleotidohydrolase (145 aa).

Substrate is bound by residues 62–64 (RSG), asparagine 75, and 79–81 (TVD).

The protein belongs to the dUTPase family. Requires Mg(2+) as cofactor.

The catalysed reaction is dUTP + H2O = dUMP + diphosphate + H(+). It functions in the pathway pyrimidine metabolism; dUMP biosynthesis; dUMP from dCTP (dUTP route): step 2/2. In terms of biological role, this enzyme is involved in nucleotide metabolism: it produces dUMP, the immediate precursor of thymidine nucleotides and it decreases the intracellular concentration of dUTP so that uracil cannot be incorporated into DNA. The chain is Deoxyuridine 5'-triphosphate nucleotidohydrolase from Gloeothece citriformis (strain PCC 7424) (Cyanothece sp. (strain PCC 7424)).